A 630-amino-acid polypeptide reads, in one-letter code: ATP-dependent zinc metalloprotease FtsH (630 aa).

Residues 1 to 7 (MNNFMKN) lie on the Cytoplasmic side of the membrane. A helical transmembrane segment spans residues 8–28 (IGFYLVLIALSILVAQFFVDT). Topologically, residues 29–111 (DVNTIVDTDV…KTEPEPTAPW (83 aa)) are periplasmic. A helical membrane pass occupies residues 112–132 (WTGMLAYILPIILLIGAWFFI). At 133–630 (MQRMQGGGSQ…ENREHENNDK (498 aa)) the chain is on the cytoplasmic side. An ATP-binding site is contributed by 203–210 (GPPGTGKT). His425 contributes to the Zn(2+) binding site. Glu426 is a catalytic residue. Residues His429 and Asp501 each coordinate Zn(2+). Positions 601–630 (KLIKGEPLDDDSIDNSTDENENREHENNDK) are disordered. Acidic residues predominate over residues 608 to 619 (LDDDSIDNSTDE). Residues 620–630 (NENREHENNDK) are compositionally biased toward basic and acidic residues.

In the central section; belongs to the AAA ATPase family. This sequence in the C-terminal section; belongs to the peptidase M41 family. As to quaternary structure, homohexamer. Requires Zn(2+) as cofactor.

It localises to the cell inner membrane. Functionally, acts as a processive, ATP-dependent zinc metallopeptidase for both cytoplasmic and membrane proteins. Plays a role in the quality control of integral membrane proteins. This is ATP-dependent zinc metalloprotease FtsH from Halothermothrix orenii (strain H 168 / OCM 544 / DSM 9562).